A 390-amino-acid chain; its full sequence is Succinate--CoA ligase [ADP-forming] subunit beta (390 aa).

Positions K9–Q248 constitute an ATP-grasp domain. Residues K50, G57–G59, E103, I106, and E111 contribute to the ATP site. N203 and D217 together coordinate Mg(2+). Residues N268 and G325–V327 each bind substrate.

Belongs to the succinate/malate CoA ligase beta subunit family. Heterotetramer of two alpha and two beta subunits. Mg(2+) serves as cofactor.

The enzyme catalyses succinate + ATP + CoA = succinyl-CoA + ADP + phosphate. The catalysed reaction is GTP + succinate + CoA = succinyl-CoA + GDP + phosphate. The protein operates within carbohydrate metabolism; tricarboxylic acid cycle; succinate from succinyl-CoA (ligase route): step 1/1. Functionally, succinyl-CoA synthetase functions in the citric acid cycle (TCA), coupling the hydrolysis of succinyl-CoA to the synthesis of either ATP or GTP and thus represents the only step of substrate-level phosphorylation in the TCA. The beta subunit provides nucleotide specificity of the enzyme and binds the substrate succinate, while the binding sites for coenzyme A and phosphate are found in the alpha subunit. In Leptospira borgpetersenii serovar Hardjo-bovis (strain JB197), this protein is Succinate--CoA ligase [ADP-forming] subunit beta.